The primary structure comprises 604 residues: 3-hydroxy-3-methylglutaryl-coenzyme A reductase (604 aa).

Residues 1 to 31 (MDVRRRSEKPAYPTKEFAAGEKPLKPHKQQQ) are disordered. Helical transmembrane passes span 40–62 (ASDA…FFSV) and 90–110 (AIAS…IGFV). Residues 111-189 (QSFVSRDNND…PLVTPAASEE (79 aa)) form a linker region. Positions 190–604 (DEEIIKSVVQ…STKDVTKASS (415 aa)) are catalytic. The active-site Charge relay system is the glutamate 283. Asparagine 347 is a glycosylation site (N-linked (GlcNAc...) asparagine). Lysine 415 (charge relay system) is an active-site residue. The N-linked (GlcNAc...) asparagine glycan is linked to asparagine 460. The active-site Charge relay system is aspartate 491. Catalysis depends on histidine 589, which acts as the Proton donor. An N-linked (GlcNAc...) asparagine glycan is attached at asparagine 593.

It belongs to the HMG-CoA reductase family. Found in protoplasts and leaves submitted to stress. Low levels found in apexes, anthers and roots.

The protein localises to the endoplasmic reticulum membrane. The enzyme catalyses (R)-mevalonate + 2 NADP(+) + CoA = (3S)-3-hydroxy-3-methylglutaryl-CoA + 2 NADPH + 2 H(+). It participates in metabolic intermediate biosynthesis; (R)-mevalonate biosynthesis; (R)-mevalonate from acetyl-CoA: step 3/3. In terms of biological role, catalyzes the synthesis of mevalonate, the specific precursor of all isoprenoid compounds present in plants. Possible role in plant defense mechanisms as well as in the cell cycle. This chain is 3-hydroxy-3-methylglutaryl-coenzyme A reductase (HMGR), found in Nicotiana sylvestris (Wood tobacco).